The primary structure comprises 977 residues: MMETCARRVLFTAALLVLSTVIAETFSTDSDTDNPLSTETFYSRASGLKQTSSWPGREATATAVDLSSGLGEMTEIPASVSITAAREGHSPKPLQTSTNAADWKTSTTSDETTEHLQSDTELTHNATAQWESPSSASHSITSHHPVTETRTVRDVTDLIDMDTTDSVSHTDSTYISTTNRVGERTLLSVISNSTFAYTQNSSISDAESQTSPWEEKTSGATQVNEETEETVSTVSEQTDPTFEGRNTTSATLETERSTLSQGTESQTGQPSVTGQTAKEVTDIDNPNSTPPLTVTSRDVEETDATSVSSETSYTQTSSDSASSILPFTSSEHNVTSTSQESHNSTLIYSTNTGGSTEFSTGSVSSTAHEETERSSTRIVDETTLHDVTSAPPVLEDVATTIDDSLSKFPSGQSPTIPKTDDQTNTQVVPTSTHRPQVTDEATDEVSTVYSSTTTLTTTTPSVTTRQLQPHYTTVQTQTQHTTIVTTDIIQVLRTTPSTAHHVPTLTTSGPQAPSTADSSDVTTLHLETSTATPGNTTAHGGRATTPFSKSSPGRTTVVVTTGHLTDKSTTETGSATTQMPLRTSASPGHVCGPKTCANGGHCVRSAEGSYYCQCLSAWTGPFCTEDVDECVNSPCPQGSVCVNTGGSFSCECDLGFDLEDGRSCTQVKTFLGTFTVNNSLHLRNLGLHELHREIQQLLNASLSIFHGYRRFTLGKRDGQGVQIPVVSMFSLSSNVTSADVFNSIQMSLNNCSRTYSHCPIKLQHQLSYHVESLCMAQKTKCDVQYSDCSDISGIPNCQCLPGYFKRNPEDMTCRDCGDGLKLVNGKCVECMFGFGGFNCNNFYKLIAVVVSPAGGALLLIVVIALIVTCCKKDKNDINKIIFKSGELQMSPYAEFPKSNRVSMEWGRETIEMQENGSTKNLLQMTDIYYSPALRNSDLERNGLYPFSGLPGSRHSCIYPAQWNPSFLSDDSRRRDYF.

Positions methionine 1–serine 27 are cleaved as a signal peptide. The interval alanine 85–arginine 153 is disordered. The span at proline 93–aspartate 110 shows a compositional bias: polar residues. Over residues threonine 112 to leucine 122 the composition is skewed to basic and acidic residues. The N-linked (GlcNAc...) asparagine glycan is linked to asparagine 125. Residues serine 132–histidine 144 show a composition bias toward low complexity. Asparagine 192, asparagine 200, and asparagine 246 each carry an N-linked (GlcNAc...) asparagine glycan. Composition is skewed to polar residues over residues asparagine 200–proline 212 and glycine 244–serine 296. Disordered regions lie at residues asparagine 200–proline 391, serine 404–valine 445, and alanine 499–serine 586. Residues threonine 311–serine 323 are compositionally biased toward low complexity. Over residues leucine 325–threonine 366 the composition is skewed to polar residues. N-linked (GlcNAc...) asparagine glycans are attached at residues asparagine 333 and asparagine 343. The segment covering alanine 367–leucine 384 has biased composition (basic and acidic residues). 4 stretches are compositionally biased toward polar residues: residues serine 404–proline 435, alanine 499–alanine 538, threonine 545–histidine 563, and threonine 570–serine 586. Residue asparagine 535 is glycosylated (N-linked (GlcNAc...) asparagine). Residues proline 587 to threonine 624 form the EGF-like 1 domain. 6 disulfide bridges follow: cysteine 591–cysteine 602, cysteine 596–cysteine 612, cysteine 614–cysteine 623, cysteine 630–cysteine 641, cysteine 635–cysteine 650, and cysteine 652–cysteine 664. Residues aspartate 626 to threonine 665 enclose the EGF-like 2; calcium-binding domain. Asparagine 677, asparagine 699, asparagine 734, and asparagine 750 each carry an N-linked (GlcNAc...) asparagine glycan. The helical transmembrane segment at isoleucine 846–isoleucine 866 threads the bilayer.

As to quaternary structure, interacts with CCM2 and KRIT1; KRIT1 markedly facilitates interaction with CCM2.

It is found in the cell membrane. Its subcellular location is the cell junction. The protein resides in the secreted. In terms of biological role, receptor component of the CCM signaling pathway which is a crucial regulator of heart and vessel formation and integrity. May act through the stabilization of endothelial cell junctions. The chain is Protein HEG (heg) from Danio rerio (Zebrafish).